We begin with the raw amino-acid sequence, 102 residues long: Small ribosomal subunit protein uS14 (102 aa).

The protein belongs to the universal ribosomal protein uS14 family. Part of the 30S ribosomal subunit. Contacts proteins S3 and S10.

In terms of biological role, binds 16S rRNA, required for the assembly of 30S particles and may also be responsible for determining the conformation of the 16S rRNA at the A site. The chain is Small ribosomal subunit protein uS14 from Ehrlichia ruminantium (strain Gardel).